A 297-amino-acid chain; its full sequence is Vacuolar protein sorting-associated protein 26 (297 aa).

The protein belongs to the VPS26 family. As to quaternary structure, component of the retromer complex, composed of VPS26, VPS29 and VPS35. As part of the retromer complex, interacts with the sorting receptor SORTLR/sortilin. Interacts with GTPase RAB7.

Its function is as follows. Plays a role in vesicular protein sorting. Component of the membrane-associated retromer complex which is essential in endosome-to-Golgi retrograde transport. This chain is Vacuolar protein sorting-associated protein 26, found in Plasmodium falciparum (isolate 3D7).